The following is a 157-amino-acid chain: Peptide methionine sulfoxide reductase MsrB (157 aa).

The region spanning 14–137 (DNDLRERLTP…NSAALRFVPL (124 aa)) is the MsrB domain. Cysteine 126 functions as the Nucleophile in the catalytic mechanism.

This sequence belongs to the MsrB Met sulfoxide reductase family.

It catalyses the reaction L-methionyl-[protein] + [thioredoxin]-disulfide + H2O = L-methionyl-(R)-S-oxide-[protein] + [thioredoxin]-dithiol. The protein is Peptide methionine sulfoxide reductase MsrB of Deinococcus radiodurans (strain ATCC 13939 / DSM 20539 / JCM 16871 / CCUG 27074 / LMG 4051 / NBRC 15346 / NCIMB 9279 / VKM B-1422 / R1).